Consider the following 883-residue polypeptide: Probable ribonuclease ZC3H12C (883 aa).

Disordered stretches follow at residues 53–109 (QLSP…ISVE) and 139–158 (DFKP…PPDV). Ser230 carries the post-translational modification Phosphoserine. One can recognise an RNase NYN domain in the interval 245 to 400 (LRPIVIDGSN…LGRHGPSLDN (156 aa)). A C3H1-type zinc finger spans residues 410-435 (EHKKQPCPYGKKCTYGHKCKYYHPER). Disordered regions lie at residues 456-551 (AKTA…FPPQ), 680-738 (FHDP…KAPH), and 754-775 (SRLY…EGLG). The span at 466–477 (KSNSVPCSTKAD) shows a compositional bias: polar residues. Residues 503 to 515 (LEEKLPTKNKLET) are compositionally biased toward basic and acidic residues. Over residues 517 to 542 (SVPSLVSIPATSTAKPQSTTSLSNGL) the composition is skewed to polar residues. The segment covering 705–714 (HLALHLPHSA) has biased composition (low complexity).

The protein belongs to the ZC3H12 family. The cofactor is Mg(2+).

In terms of biological role, may function as RNase and regulate the levels of target RNA species. The protein is Probable ribonuclease ZC3H12C (ZC3H12C) of Homo sapiens (Human).